The following is a 133-amino-acid chain: Profilin (133 aa).

The protein belongs to the profilin family.

Its function is as follows. More likely to influence phosphoinositide metabolism than actin assembly. The sequence is that of Profilin from Cowpox virus (strain GRI-90 / Grishak) (CPV).